The primary structure comprises 452 residues: Mitochondrial import inner membrane translocase subunit TIM50 (452 aa).

The transit peptide at 1–23 directs the protein to the mitochondrion; the sequence is MSLSKLTQTCFSRHQAKTFIRLY. The Mitochondrial matrix portion of the chain corresponds to 24 to 167; it reads SSDFKSLLGP…RRKRMERNTR (144 aa). 2 disordered regions span residues 96–115 and 130–153; these read IEAE…TSSA and ESAA…GNAE. The span at 131-144 shows a compositional bias: low complexity; it reads SAASKSSSSSGGSS. The chain crosses the membrane as a helical span at residues 168–188; it reads IGAYVLFGGSIIGFISFCFYY. The Mitochondrial intermembrane segment spans residues 189-452; the sequence is GRAQRDEFGN…LFGSRRHVNA (264 aa). In terms of domain architecture, FCP1 homology spans 243–387; the sequence is YLQPKYTIVI…VDLAELLKTI (145 aa).

It belongs to the TIM50 family.

The protein localises to the mitochondrion inner membrane. In terms of biological role, essential component of the TIM23 complex, a complex that mediates the translocation of transit peptide-containing proteins across the mitochondrial inner membrane. The polypeptide is Mitochondrial import inner membrane translocase subunit TIM50 (scpl-4) (Caenorhabditis elegans).